A 273-amino-acid chain; its full sequence is Putative pyruvate, phosphate dikinase regulatory protein (273 aa).

Position 153–160 (Gly-153–Thr-160) interacts with ADP.

This sequence belongs to the pyruvate, phosphate/water dikinase regulatory protein family. PDRP subfamily.

It catalyses the reaction N(tele)-phospho-L-histidyl/L-threonyl-[pyruvate, phosphate dikinase] + ADP = N(tele)-phospho-L-histidyl/O-phospho-L-threonyl-[pyruvate, phosphate dikinase] + AMP + H(+). It carries out the reaction N(tele)-phospho-L-histidyl/O-phospho-L-threonyl-[pyruvate, phosphate dikinase] + phosphate + H(+) = N(tele)-phospho-L-histidyl/L-threonyl-[pyruvate, phosphate dikinase] + diphosphate. Bifunctional serine/threonine kinase and phosphorylase involved in the regulation of the pyruvate, phosphate dikinase (PPDK) by catalyzing its phosphorylation/dephosphorylation. The sequence is that of Putative pyruvate, phosphate dikinase regulatory protein from Rhizobium etli (strain CIAT 652).